We begin with the raw amino-acid sequence, 486 residues long: Ribulose bisphosphate carboxylase large chain, plasmid (486 aa).

Residues asparagine 126 and threonine 176 each coordinate substrate. The Proton acceptor role is filled by lysine 178. Position 180 (lysine 180) interacts with substrate. The Mg(2+) site is built by lysine 204, aspartate 206, and glutamate 207. The residue at position 204 (lysine 204) is an N6-carboxylysine. Histidine 296 serves as the catalytic Proton acceptor. 3 residues coordinate substrate: arginine 297, histidine 329, and serine 381.

It belongs to the RuBisCO large chain family. Type I subfamily. Heterohexadecamer of 8 large chains and 8 small chains. The cofactor is Mg(2+).

It catalyses the reaction 2 (2R)-3-phosphoglycerate + 2 H(+) = D-ribulose 1,5-bisphosphate + CO2 + H2O. The catalysed reaction is D-ribulose 1,5-bisphosphate + O2 = 2-phosphoglycolate + (2R)-3-phosphoglycerate + 2 H(+). Its function is as follows. RuBisCO catalyzes two reactions: the carboxylation of D-ribulose 1,5-bisphosphate, the primary event in carbon dioxide fixation, as well as the oxidative fragmentation of the pentose substrate. Both reactions occur simultaneously and in competition at the same active site. The chain is Ribulose bisphosphate carboxylase large chain, plasmid (cbbL2) from Cupriavidus necator (strain ATCC 17699 / DSM 428 / KCTC 22496 / NCIMB 10442 / H16 / Stanier 337) (Ralstonia eutropha).